A 142-amino-acid chain; its full sequence is Hemoglobin subunit alpha (142 aa).

Ser1 carries the post-translational modification N-acetylserine. One can recognise a Globin domain in the interval 1–142; sequence SLSDKDKAVV…LALALSEKYR (142 aa). His59 provides a ligand contact to O2. Heme b is bound at residue His88.

Belongs to the globin family. Heterotetramer of two alpha chains and two beta chains. As to expression, red blood cells.

Involved in oxygen transport from gills to the various peripheral tissues. This chain is Hemoglobin subunit alpha (hba), found in Carassius auratus (Goldfish).